The primary structure comprises 419 residues: Adenylosuccinate synthetase (419 aa).

GTP-binding positions include 12-18 and 40-42; these read GDEGKGK and GHT. Catalysis depends on Asp13, which acts as the Proton acceptor. Residues Asp13 and Gly40 each contribute to the Mg(2+) site. Residues 13 to 16, 38 to 41, Thr128, Arg142, Gln220, Thr235, and Arg299 contribute to the IMP site; these read DEGK and NAGH. Catalysis depends on His41, which acts as the Proton donor. A substrate-binding site is contributed by 295–301; that stretch reads SITKRPR. Residues Arg301, 327–329, and 407–409 contribute to the GTP site; these read KSD and SLG.

The protein belongs to the adenylosuccinate synthetase family. In terms of assembly, homodimer. The cofactor is Mg(2+).

It is found in the cytoplasm. It carries out the reaction IMP + L-aspartate + GTP = N(6)-(1,2-dicarboxyethyl)-AMP + GDP + phosphate + 2 H(+). It functions in the pathway purine metabolism; AMP biosynthesis via de novo pathway; AMP from IMP: step 1/2. Plays an important role in the de novo pathway of purine nucleotide biosynthesis. Catalyzes the first committed step in the biosynthesis of AMP from IMP. This Azobacteroides pseudotrichonymphae genomovar. CFP2 protein is Adenylosuccinate synthetase.